The following is a 215-amino-acid chain: Outer-membrane lipoprotein LolB (215 aa).

Positions 1–19 are cleaved as a signal peptide; the sequence is MSKLRKITSLIFLTIIMVG. The N-palmitoyl cysteine moiety is linked to residue cysteine 20. Residue cysteine 20 is the site of S-diacylglycerol cysteine attachment.

This sequence belongs to the LolB family. In terms of assembly, monomer.

The protein resides in the cell outer membrane. Plays a critical role in the incorporation of lipoproteins in the outer membrane after they are released by the LolA protein. This chain is Outer-membrane lipoprotein LolB, found in Vibrio atlanticus (strain LGP32) (Vibrio splendidus (strain Mel32)).